The chain runs to 94 residues: Lipolysis-activating peptide 1-beta chain (94 aa).

The signal sequence occupies residues 1-19; the sequence is MKILAVVLISVIVLNTANG. One can recognise an LCN-type CS-alpha/beta domain in the interval 20–87; sequence ENYYPQKYTN…FFNALESQCP (68 aa). Cystine bridges form between Cys34–Cys56, Cys42–Cys66, and Cys46–Cys68.

This sequence belongs to the long (3 C-C) scorpion toxin superfamily. In terms of assembly, homodimer; disulfide-linked or monomer (edited version) or heterodimer of an alpha chain (AC D9U299 or AC D9U2A4) and this beta chain (non-edited version). In terms of tissue distribution, expressed by the venom gland.

It localises to the secreted. In terms of biological role, the homodimer inhibits HMG-CoA reductase (HMGCR) (32% of inhibition produced by 0.6 uM), a glycoprotein involved in the control of cholesterol biosynthesis. The inhibitory effects of bumarsin are seen at much lower concentrations (0.6 uM) than that for statins such as atorvastatin (5 mM) and simvastatin (10 uM). In addition to inhibition of HMG-CoA reductase, this protein lowers cholesterol levels by inducing steroid hormone synthesis via StAR, and by increasing reverse cholesterol transport mediated by the induction of ABCA1 and APOA1. Its function is as follows. The heterodimer non-edited LVP1 induces lipolysis in rat adipocytes. Induction of lipolysis by LVP1 appears to be mediated through the beta-2 adrenergic receptor pathway (ADRB2). Functionally, the monomer edited version, similar to alpha-toxins, may modulate voltage-gated sodium channels (Nav) and may block voltage-gated potassium channels (Kv). The polypeptide is Lipolysis-activating peptide 1-beta chain (Lychas mucronatus (Chinese swimming scorpion)).